The chain runs to 66 residues: Small ribosomal subunit protein eS27 (66 aa).

Zn(2+)-binding residues include Cys-21, Cys-24, Cys-40, and Cys-43. The segment at 21 to 43 (CPNCGNEQTIFSHATFPVRCLSC) adopts a C4-type zinc-finger fold.

Belongs to the eukaryotic ribosomal protein eS27 family. Part of the 30S ribosomal subunit. It depends on Zn(2+) as a cofactor.

This chain is Small ribosomal subunit protein eS27, found in Saccharolobus solfataricus (strain ATCC 35092 / DSM 1617 / JCM 11322 / P2) (Sulfolobus solfataricus).